Reading from the N-terminus, the 142-residue chain is Ribosome-binding factor A (142 aa).

This sequence belongs to the RbfA family. As to quaternary structure, monomer. Binds 30S ribosomal subunits, but not 50S ribosomal subunits or 70S ribosomes.

It localises to the cytoplasm. In terms of biological role, one of several proteins that assist in the late maturation steps of the functional core of the 30S ribosomal subunit. Associates with free 30S ribosomal subunits (but not with 30S subunits that are part of 70S ribosomes or polysomes). Required for efficient processing of 16S rRNA. May interact with the 5'-terminal helix region of 16S rRNA. In Leifsonia xyli subsp. xyli (strain CTCB07), this protein is Ribosome-binding factor A.